Reading from the N-terminus, the 279-residue chain is Protein SCO2 homolog, mitochondrial (279 aa).

A helical membrane pass occupies residues Leu-73 to Val-90. The Mitochondrial intermembrane portion of the chain corresponds to His-91–Asp-279. A Thioredoxin domain is found at Arg-97–Lys-271. Cu cation contacts are provided by Cys-145, Cys-149, and His-236. An intrachain disulfide couples Cys-145 to Cys-149.

The protein belongs to the SCO1/2 family. In terms of assembly, homodimer.

The protein localises to the mitochondrion inner membrane. In terms of biological role, copper metallochaperone essential for the synthesis and maturation of cytochrome c oxidase subunit II (MT-CO2/COX2) by facilitating the incorporation of copper into the Cu(A) site of MT-CO2/COX2. Could also act as a thiol-disulfide oxidoreductase to regulate the redox state of the cysteines in SCO1 during maturation of MT-CO2/COX2. This Danio rerio (Zebrafish) protein is Protein SCO2 homolog, mitochondrial (sco2).